The primary structure comprises 391 residues: GTPase Obg (391 aa).

Residues 1-159 (MKFVDEAVVK…REIRLELLLL (159 aa)) enclose the Obg domain. The OBG-type G domain maps to 160-333 (ADVGMLGLPN…LCYKLADFME (174 aa)). Residues 166–173 (GLPNAGKS), 191–195 (FTTLI), 213–216 (DIPG), 283–286 (NKTD), and 314–316 (SAI) contribute to the GTP site. 2 residues coordinate Mg(2+): S173 and T193. Residues 367-383 (TEEDDDDWDDCDDEDDD) show a composition bias toward acidic residues. The interval 367–391 (TEEDDDDWDDCDDEDDDGHVVYVRD) is disordered.

It belongs to the TRAFAC class OBG-HflX-like GTPase superfamily. OBG GTPase family. In terms of assembly, monomer. It depends on Mg(2+) as a cofactor.

Its subcellular location is the cytoplasm. In terms of biological role, an essential GTPase which binds GTP, GDP and possibly (p)ppGpp with moderate affinity, with high nucleotide exchange rates and a fairly low GTP hydrolysis rate. Plays a role in control of the cell cycle, stress response, ribosome biogenesis and in those bacteria that undergo differentiation, in morphogenesis control. The protein is GTPase Obg of Vibrio campbellii (strain ATCC BAA-1116).